Here is a 130-residue protein sequence, read N- to C-terminus: Glycoprotein hormone beta-5 (130 aa).

The signal sequence occupies residues 1-24 (MKLAFLFLGPMALLLLAGYGCVLG). 5 disulfide bridges follow: Cys36-Cys84, Cys50-Cys99, Cys60-Cys115, Cys64-Cys117, and Cys120-Cys127. A glycan (N-linked (GlcNAc...) asparagine) is linked at Asn87.

This sequence belongs to the glycoprotein hormones subunit beta family. As to quaternary structure, heterodimer with GPHA2; this heterodimer interacts with thyroid-stimulating hormone receptor (TSHR), and hence stimulates cAMP production. Post-translationally, N-glycosylated. Highly expressed in brain and at low levels in pituitary. Also found in retina, testis and skin but not in pancreas, parotid, kidney, stomach, liver, colon, small intestine, thyroid, brain or adrenal gland. In pituitary, colocalizes with ACTH, suggesting that it is located in corticotrophs.

It is found in the secreted. Functions as a heterodimeric glycoprotein hormone with GPHA2 able to bind and activate the thyroid-stimulating hormone receptor (TSHR), leading to increased cAMP production. Plays a central role in controlling thyroid cell metabolism. The chain is Glycoprotein hormone beta-5 (GPHB5) from Homo sapiens (Human).